The primary structure comprises 101 residues: PAT complex subunit Asterix (101 aa).

The tract at residues 1 to 26 is disordered; sequence MADPRRPARVTRYKPPTTESNPALED. Topologically, residues 1–27 are cytoplasmic; the sequence is MADPRRPARVTRYKPPTTESNPALEDP. The helical transmembrane segment at 28–46 threads the bilayer; it reads TPDYMNLLGMVFSMCGLML. Position 47 (Lys47) is a topological domain, lumenal. A helical membrane pass occupies residues 48–65; it reads LKWCAWIAVYCSFISFAN. At 66-69 the chain is on the cytoplasmic side; sequence SRSS. A helical membrane pass occupies residues 70–90; the sequence is EDTKQMMSSFMLSISAVVMSY. Residues 91–101 lie on the Lumenal side of the membrane; sequence LQNPQPMSPPW.

It belongs to the Asterix family. In terms of assembly, component of the multi-pass translocon (MPT) complex.

It localises to the endoplasmic reticulum membrane. Functionally, component of the multi-pass translocon (MPT) complex that mediates insertion of multi-pass membrane proteins into the lipid bilayer of membranes. The MPT complex takes over after the SEC61 complex: following membrane insertion of the first few transmembrane segments of proteins by the SEC61 complex, the MPT complex occludes the lateral gate of the SEC61 complex to promote insertion of subsequent transmembrane regions. The sequence is that of PAT complex subunit Asterix (WDR83OS) from Gallus gallus (Chicken).